The sequence spans 231 residues: tRNA (guanine-N(1)-)-methyltransferase (231 aa).

S-adenosyl-L-methionine contacts are provided by residues G112 and 132–137 (LGDFVL).

This sequence belongs to the RNA methyltransferase TrmD family. In terms of assembly, homodimer.

It is found in the cytoplasm. It catalyses the reaction guanosine(37) in tRNA + S-adenosyl-L-methionine = N(1)-methylguanosine(37) in tRNA + S-adenosyl-L-homocysteine + H(+). Its function is as follows. Specifically methylates guanosine-37 in various tRNAs. The chain is tRNA (guanine-N(1)-)-methyltransferase from Microcystis aeruginosa (strain NIES-843 / IAM M-2473).